A 146-amino-acid polypeptide reads, in one-letter code: Hemoglobin subunit beta (146 aa).

The residue at position 1 (V1) is an N-acetylvaline. Residues 2–146 (NLTAAEKTQV…VANALAHKYH (145 aa)) enclose the Globin domain. At T12 the chain carries Phosphothreonine. K59 bears the N6-acetyllysine mark. H63 provides a ligand contact to heme b. K82 carries the N6-acetyllysine modification. Residue H92 participates in heme b binding. Residue C93 is modified to S-nitrosocysteine. At K144 the chain carries N6-acetyllysine.

The protein belongs to the globin family. In terms of assembly, heterotetramer of two alpha chains and two beta chains. Red blood cells.

Its function is as follows. Involved in oxygen transport from the lung to the various peripheral tissues. This Loxodonta africana (African elephant) protein is Hemoglobin subunit beta (HBB).